A 155-amino-acid polypeptide reads, in one-letter code: Dau c 1 isoallergen Dau c 1.0401 (155 aa).

Belongs to the BetVI family. In terms of assembly, monomer. As to expression, expressed in roots (at protein level). Expressed in roots.

In Daucus carota subsp. sativus (Carrot), this protein is Dau c 1 isoallergen Dau c 1.0401.